Here is a 627-residue protein sequence, read N- to C-terminus: (R)-linalool synthase, chloroplastic (627 aa).

The transit peptide at 1 to 21 (MAFVSIAPLASRCCVHKSFVS) directs the protein to the chloroplast. Asp378, Asp382, and Glu530 together coordinate Mg(2+). Positions 378–382 (DDIYD) match the DDXXD motif motif.

This sequence belongs to the terpene synthase family. Tpsd subfamily. Mg(2+) serves as cofactor. Requires Mn(2+) as cofactor.

It is found in the plastid. The protein resides in the chloroplast. The enzyme catalyses (2E)-geranyl diphosphate + H2O = (R)-linalool + diphosphate. It participates in terpene metabolism; oleoresin biosynthesis. In terms of biological role, terpene synthase (TPS) involved in the biosynthesis of monoterpene natural products included in conifer oleoresin secretions and volatile emissions; these compounds contribute to biotic and abiotic stress defense against herbivores and pathogens. Catalyzes the conversion of (2E)-geranyl diphosphate (GPP) to (R)-linalool. The protein is (R)-linalool synthase, chloroplastic of Picea glauca (White spruce).